Here is a 1660-residue protein sequence, read N- to C-terminus: Cortactin-binding protein 2 (1660 aa).

4 disordered regions span residues 1 to 26 (MATD…TAEA), 203 to 222 (KKKT…RSTE), 366 to 440 (IGVS…LHPG), and 454 to 478 (GNAN…SPTS). Residues 119-276 (RKMQERMSAQ…EQLKRGSDSK (158 aa)) are a coiled coil. The segment covering 386 to 396 (PSTGSTPDPTS) has biased composition (low complexity). Polar residues predominate over residues 411–422 (QTPGITPQNSQA). The residue at position 498 (Arg498) is an Asymmetric dimethylarginine. The disordered stretch occupies residues 499-596 (FTGPQAGAPP…PPSSLPQGNR (98 aa)). Positions 583–593 (TVASPPSSLPQ) are enriched in polar residues. ANK repeat units follow at residues 709–739 (GRPT…DINY), 743–772 (DGHS…QVNA), 776–805 (NGFT…HINH), 809–838 (GGQT…DRSV), and 842–871 (DGWT…PAHG). The segment at 872–897 (NSFSEEESESGVFDLDGEEESPEGKS) is disordered. Acidic residues predominate over residues 875 to 892 (SEEESESGVFDLDGEEES). The ANK 6 repeat unit spans residues 912–942 (EGWTAAHIAASKGFKNCLEILCRHGGLETER). Residues 1445 to 1477 (CSKKKGESGSWRKVNTSPRRKSGRFSLPTWNKP) are disordered. Ser1524 is subject to Phosphoserine. Residues 1617 to 1660 (RSKVTQCSQNTKSSSSNTRQIEINNSKEENWNFHKNEHLEKPNK) are disordered. A compositionally biased stretch (polar residues) spans 1619-1640 (KVTQCSQNTKSSSSNTRQIEIN). Residues 1641-1660 (NSKEENWNFHKNEHLEKPNK) are compositionally biased toward basic and acidic residues.

In terms of assembly, interacts with CTTN/cortactin SH3 domain. Interacts with STRN, STRN4/zinedin and MOB4/phocein; this interactions mediate the association with the STRIPAK core complex and may regulate dendritic spine distribution of the STRIPAK complex in hippocampal neurons. Activation of glutamate receptors weakens the interaction with STRN and STRN4.

It is found in the cytoplasm. The protein resides in the cell cortex. Its subcellular location is the cell projection. It localises to the dendritic spine. Regulates the dendritic spine distribution of CTTN/cortactin in hippocampal neurons, and thus controls dendritic spinogenesis and dendritic spine maintenance. Associates with the striatin-interacting phosphatase and kinase (STRIPAK) core complex to regulate dendritic spine distribution of the STRIPAK complex in hippocampal neurons. In Ateles geoffroyi (Black-handed spider monkey), this protein is Cortactin-binding protein 2 (CTTNBP2).